A 463-amino-acid polypeptide reads, in one-letter code: General transcription factor IIH subunit 4 (463 aa).

This sequence belongs to the TFB2 family. In terms of assembly, component of the 7-subunit TFIIH core complex composed of XPB/ERCC3, XPD/ERCC2, GTF2H1, GTF2H2, GTF2H3, GTF2H4 and GTF2H5, which is active in NER. The core complex associates with the 3-subunit CDK-activating kinase (CAK) module composed of CCNH/cyclin H, CDK7 and MNAT1 to form the 10-subunit holoenzyme (holo-TFIIH) active in transcription. Part of TBP-based Pol II pre-initiation complex (PIC), in which Pol II core assembles with general transcription factors and other specific initiation factors including GTF2E1, GTF2E2, GTF2F1, GTF2F2, TCEA1, ERCC2, ERCC3, GTF2H2, GTF2H3, GTF2H4, GTF2H5, GTF2A1, GTF2A2, GTF2B and TBP; this large multi-subunit PIC complex mediates DNA unwinding and targets Pol II core to the transcription start site where the first phosphodiester bond forms.

The protein localises to the nucleus. Functionally, component of the general transcription and DNA repair factor IIH (TFIIH) core complex, which is involved in general and transcription-coupled nucleotide excision repair (NER) of damaged DNA and, when complexed to CAK, in RNA transcription by RNA polymerase II. In NER, TFIIH acts by opening DNA around the lesion to allow the excision of the damaged oligonucleotide and its replacement by a new DNA fragment. In transcription, TFIIH has an essential role in transcription initiation. When the pre-initiation complex (PIC) has been established, TFIIH is required for promoter opening and promoter escape. Phosphorylation of the C-terminal tail (CTD) of the largest subunit of RNA polymerase II by the kinase module CAK controls the initiation of transcription. In Mus musculus (Mouse), this protein is General transcription factor IIH subunit 4 (Gtf2h4).